We begin with the raw amino-acid sequence, 590 residues long: Probable metalloendopeptidase G1-type (590 aa).

His-41 provides a ligand contact to Zn(2+). Residue Glu-44 is part of the active site. His-45 serves as a coordination point for Zn(2+).

Belongs to the peptidase M44 family. Requires Zn(2+) as cofactor.

In terms of biological role, seems to be involved in viral proteins maturation by cleavage at Ala-Gly-|-Xaa motifs. This Oryctolagus cuniculus (Rabbit) protein is Probable metalloendopeptidase G1-type.